A 553-amino-acid chain; its full sequence is Cytokine-like nuclear factor N-PAC (553 aa).

A PWWP domain is found at 8 to 66 (LGDLVWGKLGRYPPWPGKIVNPPKDLKKPRGKKCFFVKFFGTEDHAWIKVEQLKPYHAH). Composition is skewed to basic and acidic residues over residues 92–145 (RAKG…EGKK) and 162–182 (RAQE…KDLS). Residues 92-190 (RAKGKDQTSS…LSIPESSTVK (99 aa)) are disordered. Ser-130 is modified (phosphoserine). Lys-135 participates in a covalent cross-link: Glycyl lysine isopeptide (Lys-Gly) (interchain with G-Cter in SUMO2). Ser-167 is modified (phosphoserine). A DNA-binding region (a.T hook) is located at residues 168–180 (PRKRGRPPKDEKD). Residues Lys-176, Lys-179, Lys-201, and Lys-211 each participate in a glycyl lysine isopeptide (Lys-Gly) (interchain with G-Cter in SUMO2) cross-link. The interaction with histone H3 stretch occupies residues 214–217 (DPHF). The interaction with KDM1B stretch occupies residues 216 to 225 (HFHHFLLSQT). Glycyl lysine isopeptide (Lys-Gly) (interchain with G-Cter in SUMO2) cross-links involve residues Lys-227, Lys-237, Lys-240, and Lys-269. A dehydrogenase domain region spans residues 261–553 (GSVTPTDKKI…MSAVYRAYIH (293 aa)). 271 to 285 (GFLGLGLMGSGIVSN) is a binding site for NAD(+). Residue Lys-302 forms a Glycyl lysine isopeptide (Lys-Gly) (interchain with G-Cter in SUMO2) linkage. NAD(+) is bound by residues Thr-362 and Lys-505. Position 540 is a phosphoserine (Ser-540).

The protein belongs to the HIBADH-related family. NP60 subfamily. Homotetramere. Interacts with MAPK14. Interacts with KDM1B at nucleosomes; this interaction stimulates H3K4me1 and H3K4me2 demethylation. Binds to mononucleosomes. Interacts with GATA4; the interaction is required for a synergistic activation of GATA4 target genes transcription.

The protein resides in the nucleus. It localises to the chromosome. Its function is as follows. Cytokine-like nuclear factor with chromatin gene reader activity involved in chromatin modification and regulation of gene expression. Acts as a nucleosome-destabilizing factor that is recruited to genes during transcriptional activation. Recognizes and binds histone H3 without a preference for specific epigenetic markers and also binds DNA. Interacts with KDM1B and promotes its histone demethylase activity by facilitating the capture of H3 tails, they form a multifunctional enzyme complex that modifies transcribed chromatin and facilitates Pol II transcription through nucleosomes. Stimulates the acetylation of 'Lys-56' of nucleosomal histone H3 (H3K56ac) by EP300. With GATA4, co-binds a defined set of heart development genes and coregulates their expression during cardiomyocyte differentiation. Regulates p38 MAP kinase activity by mediating stress activation of MAPK14/p38alpha and specifically regulating MAPK14 signaling. Indirectly promotes phosphorylation of MAPK14 and activation of ATF2. The phosphorylation of MAPK14 requires upstream activity of MAP2K4 and MAP2K6. The chain is Cytokine-like nuclear factor N-PAC (GLYR1) from Bos taurus (Bovine).